A 458-amino-acid chain; its full sequence is Retinoic acid receptor alpha (458 aa).

The modulating stretch occupies residues 1–87 (MSSKDNTCPP…PPPLPRIYKP (87 aa)). The disordered stretch occupies residues 39–78 (GGLPGVQHQPPLSGYSTPSPATIETQSTSSEEIVPSPPTP). A compositionally biased stretch (polar residues) spans 52–69 (GYSTPSPATIETQSTSSE). NR C4-type zinc fingers lie at residues 88-108 (CFVC…CEGC) and 124-148 (CHRD…LQKC). A DNA-binding region (nuclear receptor) is located at residues 88-153 (CFVCQDKSSG…RLQKCFEVGM (66 aa)). Residues 154–182 (SKESVRNDRNKKKKESPKPEAIESYILSP) form a hinge region. One can recognise an NR LBD domain in the interval 183 to 417 (ETQDLIEKVQ…LIQEMLENSE (235 aa)). The 9aaTAD signature appears at 407–415 (PLIQEMLEN). The disordered stretch occupies residues 419–458 (LDTLGGGASSDAPVTPVAPGSCSPSLSPSSTHSSPSTHSP). Low complexity predominate over residues 439-458 (SCSPSLSPSSTHSSPSTHSP).

The protein belongs to the nuclear hormone receptor family. NR1 subfamily. Heterodimer; with an rxr molecule. Binds DNA preferentially as a rar/rxr heterodimer.

The protein resides in the nucleus. Its function is as follows. Receptor for retinoic acid. Retinoic acid receptors bind as heterodimers to their target response elements in response to their ligands, all-trans or 9-cis retinoic acid, and regulate gene expression in various biological processes. The rar/rxr heterodimers bind to the retinoic acid response elements (RARE) composed of tandem 5'-AGGTCA-3' sites known as DR1-DR5. Required for primary neurogenesis and for anteroposterior neural patterning. This chain is Retinoic acid receptor alpha (rara), found in Xenopus laevis (African clawed frog).